Consider the following 545-residue polypeptide: CTP synthase (545 aa).

Residues 1 to 265 (MTKYIFITGG…DEIVVKKLSL (265 aa)) form an amidoligase domain region. Ser-13 contributes to the CTP binding site. Residue Ser-13 participates in UTP binding. ATP is bound by residues 14 to 19 (SLGKGI) and Asp-71. Residues Asp-71 and Glu-139 each contribute to the Mg(2+) site. CTP contacts are provided by residues 146–148 (DIE), 186–191 (KTKPTQ), and Lys-222. UTP-binding positions include 186–191 (KTKPTQ) and Lys-222. The 252-residue stretch at 290–541 (KIAMVGKYTE…VFAARIHHQE (252 aa)) folds into the Glutamine amidotransferase type-1 domain. Gly-351 contributes to the L-glutamine binding site. Cys-378 (nucleophile; for glutamine hydrolysis) is an active-site residue. L-glutamine-binding positions include 379-382 (LGMQ), Glu-402, and Arg-469. Active-site residues include His-514 and Glu-516.

The protein belongs to the CTP synthase family. As to quaternary structure, homotetramer.

The enzyme catalyses UTP + L-glutamine + ATP + H2O = CTP + L-glutamate + ADP + phosphate + 2 H(+). It catalyses the reaction L-glutamine + H2O = L-glutamate + NH4(+). The catalysed reaction is UTP + NH4(+) + ATP = CTP + ADP + phosphate + 2 H(+). It participates in pyrimidine metabolism; CTP biosynthesis via de novo pathway; CTP from UDP: step 2/2. With respect to regulation, allosterically activated by GTP, when glutamine is the substrate; GTP has no effect on the reaction when ammonia is the substrate. The allosteric effector GTP functions by stabilizing the protein conformation that binds the tetrahedral intermediate(s) formed during glutamine hydrolysis. Inhibited by the product CTP, via allosteric rather than competitive inhibition. Its function is as follows. Catalyzes the ATP-dependent amination of UTP to CTP with either L-glutamine or ammonia as the source of nitrogen. Regulates intracellular CTP levels through interactions with the four ribonucleotide triphosphates. This Legionella pneumophila (strain Lens) protein is CTP synthase.